The sequence spans 370 residues: Lipoyl synthase, mitochondrial (370 aa).

Residues cysteine 104, cysteine 109, cysteine 115, cysteine 135, cysteine 139, cysteine 142, and serine 350 each coordinate [4Fe-4S] cluster. Residues 118-339 form the Radical SAM core domain; sequence GGDKSKATAT…KQKALELGFL (222 aa).

The protein belongs to the radical SAM superfamily. Lipoyl synthase family. It depends on [4Fe-4S] cluster as a cofactor.

The protein resides in the mitochondrion. The enzyme catalyses [[Fe-S] cluster scaffold protein carrying a second [4Fe-4S](2+) cluster] + N(6)-octanoyl-L-lysyl-[protein] + 2 oxidized [2Fe-2S]-[ferredoxin] + 2 S-adenosyl-L-methionine + 4 H(+) = [[Fe-S] cluster scaffold protein] + N(6)-[(R)-dihydrolipoyl]-L-lysyl-[protein] + 4 Fe(3+) + 2 hydrogen sulfide + 2 5'-deoxyadenosine + 2 L-methionine + 2 reduced [2Fe-2S]-[ferredoxin]. Its pathway is protein modification; protein lipoylation via endogenous pathway; protein N(6)-(lipoyl)lysine from octanoyl-[acyl-carrier-protein]: step 2/2. Functionally, catalyzes the radical-mediated insertion of two sulfur atoms into the C-6 and C-8 positions of the octanoyl moiety bound to the lipoyl domains of lipoate-dependent enzymes, thereby converting the octanoylated domains into lipoylated derivatives. The sequence is that of Lipoyl synthase, mitochondrial from Kluyveromyces lactis (strain ATCC 8585 / CBS 2359 / DSM 70799 / NBRC 1267 / NRRL Y-1140 / WM37) (Yeast).